The chain runs to 294 residues: Ribosomal protein L11 methyltransferase (294 aa).

Residues Thr-146, Gly-167, Asp-189, and Asn-231 each contribute to the S-adenosyl-L-methionine site.

The protein belongs to the methyltransferase superfamily. PrmA family.

It localises to the cytoplasm. It carries out the reaction L-lysyl-[protein] + 3 S-adenosyl-L-methionine = N(6),N(6),N(6)-trimethyl-L-lysyl-[protein] + 3 S-adenosyl-L-homocysteine + 3 H(+). Methylates ribosomal protein L11. This is Ribosomal protein L11 methyltransferase from Photobacterium profundum (strain SS9).